We begin with the raw amino-acid sequence, 75 residues long: Small ribosomal subunit protein bS18 (75 aa).

This sequence belongs to the bacterial ribosomal protein bS18 family. Part of the 30S ribosomal subunit. Forms a tight heterodimer with protein bS6.

Its function is as follows. Binds as a heterodimer with protein bS6 to the central domain of the 16S rRNA, where it helps stabilize the platform of the 30S subunit. The sequence is that of Small ribosomal subunit protein bS18 from Shewanella baltica (strain OS223).